Reading from the N-terminus, the 82-residue chain is uncharacterized protein (82 aa).

A run of 2 helical transmembrane segments spans residues leucine 8–proline 28 and leucine 50–leucine 70.

Its subcellular location is the cell membrane. This is an uncharacterized protein from Klebsiella pneumoniae.